The following is a 61-amino-acid chain: Ubiquinol-cytochrome c reductase complex assembly factor 6 (61 aa).

Residues 1 to 9 (MPAGVSWGQ) lie on the Mitochondrial matrix side of the membrane. The helical transmembrane segment at 10-32 (YLKFLGCALASMMAGSQAVHLYY) threads the bilayer. Over 33 to 61 (KPLEDLRVYIEQEQHSTQVDPTAKPPESA) the chain is Mitochondrial intermembrane.

This sequence belongs to the UQCC6 family. As to quaternary structure, interacts with sloth1; the interaction stabilizes both components. Expressed in the brain.

The protein localises to the mitochondrion inner membrane. Its subcellular location is the mitochondrion. Required for the assembly and stability of the mitochondrial ubiquinol-cytochrome c reductase complex (complex III (CIII) or cytochrome b-c1 complex), a multisubunit transmembrane complex that is part of the mitochondrial electron transport chain (ETC) which drives oxidative phosphorylation. In Drosophila melanogaster (Fruit fly), this protein is Ubiquinol-cytochrome c reductase complex assembly factor 6.